Consider the following 234-residue polypeptide: Phosphoribosylaminoimidazole-succinocarboxamide synthase (234 aa).

Belongs to the SAICAR synthetase family.

It catalyses the reaction 5-amino-1-(5-phospho-D-ribosyl)imidazole-4-carboxylate + L-aspartate + ATP = (2S)-2-[5-amino-1-(5-phospho-beta-D-ribosyl)imidazole-4-carboxamido]succinate + ADP + phosphate + 2 H(+). It participates in purine metabolism; IMP biosynthesis via de novo pathway; 5-amino-1-(5-phospho-D-ribosyl)imidazole-4-carboxamide from 5-amino-1-(5-phospho-D-ribosyl)imidazole-4-carboxylate: step 1/2. The protein is Phosphoribosylaminoimidazole-succinocarboxamide synthase of Streptococcus pyogenes serotype M3 (strain ATCC BAA-595 / MGAS315).